A 384-amino-acid polypeptide reads, in one-letter code: Deoxyguanosinetriphosphate triphosphohydrolase-like protein (384 aa).

The disordered stretch occupies residues 12–39; sequence ELASYASDPSKTRGRRHSEPPPENRTEF. The span at 28 to 39 shows a compositional bias: basic and acidic residues; it reads HSEPPPENRTEF. One can recognise an HD domain in the interval 73 to 208; sequence RLTHSLEVAQ…ANLADEVAYN (136 aa).

It belongs to the dGTPase family. Type 2 subfamily.

The sequence is that of Deoxyguanosinetriphosphate triphosphohydrolase-like protein from Bordetella parapertussis (strain 12822 / ATCC BAA-587 / NCTC 13253).